Reading from the N-terminus, the 177-residue chain is Immunity protein CdiI-YPIII (177 aa).

In terms of assembly, interacts with the C-terminal DNase fragment (residues 954-1077) of cognate toxin CdiA-YPIII.

Immunity protein component of a toxin-immunity protein module, which functions as a cellular contact-dependent growth inhibition (CDI) system. CDI modules allow bacteria to communicate with and inhibit the growth of closely related neighboring bacteria in a contact-dependent fashion. Neutralizes the toxic activity of cognate toxin CdiA-YPIII (residues 954-1077). Does not inhibit toxic activity of CdiA from other toxin-immunity modules. In Yersinia pseudotuberculosis serotype O:3 (strain YPIII), this protein is Immunity protein CdiI-YPIII.